The following is a 306-amino-acid chain: Curved DNA-binding protein (306 aa).

Positions 5-69 (DYYAIMGVKP…QRRAEYDQLW (65 aa)) constitute a J domain.

The protein resides in the cytoplasm. The protein localises to the nucleoid. DNA-binding protein that preferentially recognizes a curved DNA sequence. It is probably a functional analog of DnaJ; displays overlapping activities with DnaJ, but functions under different conditions, probably acting as a molecular chaperone in an adaptive response to environmental stresses other than heat shock. Lacks autonomous chaperone activity; binds native substrates and targets them for recognition by DnaK. Its activity is inhibited by the binding of CbpM. In Citrobacter koseri (strain ATCC BAA-895 / CDC 4225-83 / SGSC4696), this protein is Curved DNA-binding protein.